The sequence spans 400 residues: Zinc finger protein 514 (400 aa).

Residues 1–72 (MTFEDVAVEF…EREISTGAHS (72 aa)) form the KRAB domain. 7 consecutive C2H2-type zinc fingers follow at residues 204–226 (CKCNECGKSFHFQSELRRHQRCH), 232–254 (YECSDCGRAFGHISSLIKHQRTH), 260–282 (YECSECGRAFSQSSSLVLHYRFH), 288–310 (YKCNECGRAFGHTSSLIKHQRTH), 316–338 (YECRECGRTFSQSSSLIVHYRFH), 344–366 (YKCNKCGRAFSQSSSLTQHYRFH), and 372–394 (YKCNECGRAFAHTASLIKHQRSH).

The protein belongs to the krueppel C2H2-type zinc-finger protein family.

Its subcellular location is the nucleus. Functionally, may be involved in transcriptional regulation. The chain is Zinc finger protein 514 (ZNF514) from Homo sapiens (Human).